A 273-amino-acid chain; its full sequence is Flagellin FljN (273 aa).

This sequence belongs to the bacterial flagellin family. In C.crescentus, the flagellar filament is composed of multiple flagellins of 29 kDa; 27 kDa and 25 kDa.

It localises to the secreted. Its subcellular location is the bacterial flagellum. Flagellin is the subunit protein which polymerizes to form the filaments of bacterial flagella. The protein is Flagellin FljN (fljN) of Caulobacter vibrioides (strain ATCC 19089 / CIP 103742 / CB 15) (Caulobacter crescentus).